The chain runs to 525 residues: GMP synthase [glutamine-hydrolyzing] (525 aa).

Residues R9–L207 enclose the Glutamine amidotransferase type-1 domain. C86 (nucleophile) is an active-site residue. Catalysis depends on residues H181 and E183. Positions W208–R400 constitute a GMPS ATP-PPase domain. S235–S241 is an ATP binding site.

Homodimer.

It catalyses the reaction XMP + L-glutamine + ATP + H2O = GMP + L-glutamate + AMP + diphosphate + 2 H(+). Its pathway is purine metabolism; GMP biosynthesis; GMP from XMP (L-Gln route): step 1/1. Functionally, catalyzes the synthesis of GMP from XMP. The chain is GMP synthase [glutamine-hydrolyzing] from Cronobacter sakazakii (strain ATCC BAA-894) (Enterobacter sakazakii).